The sequence spans 174 residues: FMN reductase (NADH) RutF (174 aa).

It belongs to the non-flavoprotein flavin reductase family. RutF subfamily.

The enzyme catalyses FMNH2 + NAD(+) = FMN + NADH + 2 H(+). In terms of biological role, catalyzes the reduction of FMN to FMNH2 which is used to reduce pyrimidine by RutA via the Rut pathway. This Stutzerimonas stutzeri (strain A1501) (Pseudomonas stutzeri) protein is FMN reductase (NADH) RutF.